We begin with the raw amino-acid sequence, 281 residues long: Putative phosphatase/phosphodiesterase MG246 (281 aa).

Residues D11, E42, N43, and N70 each coordinate Fe cation. Catalysis depends on H71, which acts as the Proton donor. 3 residues coordinate Fe cation: H157, H182, and H184.

It belongs to the YmdB-like family. Fe(3+) serves as cofactor.

In Mycoplasma genitalium (strain ATCC 33530 / DSM 19775 / NCTC 10195 / G37) (Mycoplasmoides genitalium), this protein is Putative phosphatase/phosphodiesterase MG246.